The primary structure comprises 376 residues: N-acetyldiaminopimelate deacetylase (376 aa).

The active site involves D69. The active-site Proton acceptor is E127.

It belongs to the peptidase M20A family. N-acetyldiaminopimelate deacetylase subfamily.

The catalysed reaction is N-acetyl-(2S,6S)-2,6-diaminopimelate + H2O = (2S,6S)-2,6-diaminopimelate + acetate. It participates in amino-acid biosynthesis; L-lysine biosynthesis via DAP pathway; LL-2,6-diaminopimelate from (S)-tetrahydrodipicolinate (acetylase route): step 3/3. Functionally, catalyzes the conversion of N-acetyl-diaminopimelate to diaminopimelate and acetate. The polypeptide is N-acetyldiaminopimelate deacetylase (Lactococcus lactis subsp. cremoris (strain SK11)).